Consider the following 274-residue polypeptide: MSNFSLSPSPTSGFSLNLQNPTKTSYLSFSSSINTIFAPLSSNTTKSFSGLTHKAALPRNLSLTCRHSDYFEPQQQQQQQQQQPQGASTPKVFVGYSIYKGKAALTVEPRSPEFSPLDSGAFKLSREGMVMLQFAPAAGVRQYDWSRKQVFSLSVTEIGSIISLGAKDSCEFFHDPNKGRSDEGRVRKVLKVEPLPDGSGHFFNLSVQNKLINLDENIYIPVTKAEFAVLVSAFNFVMPYLLGWHTAVNSFKPEDASRSNNANPRSGAELEWNR.

A chloroplast-targeting transit peptide spans M1 to K54. Residues K100–L105 form a required for ssDNA binding region. A Nuclear localization signal motif is present at residues K178 to K191. A disordered region spans residues P253–R274.

This sequence belongs to the Whirly family. In terms of assembly, homotetramer.

It is found in the nucleus. The protein resides in the plastid. It localises to the chloroplast. Single-stranded DNA-binding protein that acts as a transcriptional activator of the pathogenesis-related gene PR-10a. Upon elicitation, binds a 30bp promoter sequence known as elicitor element response (ERE) and is required for PR-10a expression. This chain is Single-stranded DNA-binding protein WHY1, chloroplastic (WHY1), found in Solanum tuberosum (Potato).